The following is a 110-amino-acid chain: Ribonuclease P protein component 1 (110 aa).

Belongs to the eukaryotic/archaeal RNase P protein component 1 family. In terms of assembly, consists of a catalytic RNA component and at least 4-5 protein subunits.

The protein localises to the cytoplasm. It catalyses the reaction Endonucleolytic cleavage of RNA, removing 5'-extranucleotides from tRNA precursor.. Functionally, part of ribonuclease P, a protein complex that generates mature tRNA molecules by cleaving their 5'-ends. The chain is Ribonuclease P protein component 1 from Methanosarcina barkeri (strain Fusaro / DSM 804).